The primary structure comprises 102 residues: Small ubiquitin-related modifier 1-A (102 aa).

Positions 1-20 are disordered; sequence MSDQEAKPSSEDLGDKKDGG. One can recognise a Ubiquitin-like domain in the interval 21–98; it reads DYIKLKVIGQ…IEVYQEQTGG (78 aa). A Glycyl lysine isopeptide (Gly-Lys) (interchain with K-? in acceptor proteins) cross-link involves residue glycine 98. The propeptide occupies 99-102; it reads HSTF.

It belongs to the ubiquitin family. SUMO subfamily. In terms of assembly, interacts with sae2, ube2i, ranbp2, pias1 and pias2. Covalently attached to a number of proteins including rangap1 and ranbp2. Interacts with sox9 and sox10. Post-translationally, cleavage of precursor form by a sentrin-specific protease is necessary for function.

It is found in the nucleus membrane. It localises to the nucleus speckle. Its subcellular location is the cytoplasm. The protein resides in the nucleus. The protein localises to the PML body. It is found in the cell membrane. Its function is as follows. Ubiquitin-like protein that can be covalently attached to proteins as a monomer or a lysine-linked polymer. Covalent attachment via an isopeptide bond to its substrates requires prior activation by the E1 complex sae1-sae2 and linkage to the E2 enzyme ube2i. This post-translational modification on lysine residues of proteins plays a crucial role in a number of cellular processes such as nuclear transport, DNA replication and repair, mitosis and signal transduction. Polymeric sumo1 chains are also susceptible to polyubiquitination which functions as a signal for proteasomal degradation of modified proteins. The sequence is that of Small ubiquitin-related modifier 1-A (sumo1-a) from Xenopus laevis (African clawed frog).